We begin with the raw amino-acid sequence, 447 residues long: Methyl-coenzyme M reductase II subunit beta (447 aa).

A coenzyme M-binding site is contributed by Y368. G370 is a coenzyme B binding site.

It belongs to the methyl-coenzyme M reductase beta subunit family. As to quaternary structure, MCR is a hexamer of two alpha, two beta, and two gamma chains, forming a dimer of heterotrimers. The cofactor is coenzyme F430.

It catalyses the reaction coenzyme B + methyl-coenzyme M = methane + coenzyme M-coenzyme B heterodisulfide. It participates in one-carbon metabolism; methyl-coenzyme M reduction; methane from methyl-coenzyme M: step 1/1. Functionally, component of the methyl-coenzyme M reductase (MCR) I that catalyzes the reductive cleavage of methyl-coenzyme M (CoM-S-CH3 or 2-(methylthio)ethanesulfonate) using coenzyme B (CoB or 7-mercaptoheptanoylthreonine phosphate) as reductant which results in the production of methane and the mixed heterodisulfide of CoB and CoM (CoM-S-S-CoB). This is the final step in methanogenesis. The sequence is that of Methyl-coenzyme M reductase II subunit beta (mrtB) from Methanocaldococcus jannaschii (strain ATCC 43067 / DSM 2661 / JAL-1 / JCM 10045 / NBRC 100440) (Methanococcus jannaschii).